The following is a 539-amino-acid chain: BTB/POZ domain-containing protein 6 (539 aa).

A signal peptide spans 1–23; the sequence is MLLPLACLHGRVAQCLTSLLVLA. The BTB domain occupies 137–207; that stretch reads ADVHFIVGAL…MYSDEIDLEA (71 aa).

Its subcellular location is the cytoplasm. In terms of biological role, adapter protein for the cul3 E3 ubiquitin-protein ligase complex. Involved in late neuronal development and muscle formation. In Mus musculus (Mouse), this protein is BTB/POZ domain-containing protein 6 (Btbd6).